Reading from the N-terminus, the 282-residue chain is Phosphatidylglycerol--prolipoprotein diacylglyceryl transferase (282 aa).

The next 3 membrane-spanning stretches (helical) occupy residues 18 to 38, 56 to 76, and 89 to 109; these read IQVH…VALA, ILWA…IFQW, and IWDG…VVIL. A 1,2-diacyl-sn-glycero-3-phospho-(1'-sn-glycerol) is bound at residue Arg-137. Residues 237–257 form a helical membrane-spanning segment; that stretch reads VIRVSQALSVVLFFGSIGLMI.

The protein belongs to the Lgt family.

Its subcellular location is the cell membrane. The enzyme catalyses L-cysteinyl-[prolipoprotein] + a 1,2-diacyl-sn-glycero-3-phospho-(1'-sn-glycerol) = an S-1,2-diacyl-sn-glyceryl-L-cysteinyl-[prolipoprotein] + sn-glycerol 1-phosphate + H(+). It functions in the pathway protein modification; lipoprotein biosynthesis (diacylglyceryl transfer). Catalyzes the transfer of the diacylglyceryl group from phosphatidylglycerol to the sulfhydryl group of the N-terminal cysteine of a prolipoprotein, the first step in the formation of mature lipoproteins. In Lactiplantibacillus plantarum (strain ATCC BAA-793 / NCIMB 8826 / WCFS1) (Lactobacillus plantarum), this protein is Phosphatidylglycerol--prolipoprotein diacylglyceryl transferase.